A 156-amino-acid chain; its full sequence is ATP synthase subunit b (156 aa).

The chain crosses the membrane as a helical span at residues 7–29 (LIGQSITFIFFVWFSMKFVWPPI).

This sequence belongs to the ATPase B chain family. F-type ATPases have 2 components, F(1) - the catalytic core - and F(0) - the membrane proton channel. F(1) has five subunits: alpha(3), beta(3), gamma(1), delta(1), epsilon(1). F(0) has three main subunits: a(1), b(2) and c(10-14). The alpha and beta chains form an alternating ring which encloses part of the gamma chain. F(1) is attached to F(0) by a central stalk formed by the gamma and epsilon chains, while a peripheral stalk is formed by the delta and b chains.

It localises to the cell inner membrane. F(1)F(0) ATP synthase produces ATP from ADP in the presence of a proton or sodium gradient. F-type ATPases consist of two structural domains, F(1) containing the extramembraneous catalytic core and F(0) containing the membrane proton channel, linked together by a central stalk and a peripheral stalk. During catalysis, ATP synthesis in the catalytic domain of F(1) is coupled via a rotary mechanism of the central stalk subunits to proton translocation. Functionally, component of the F(0) channel, it forms part of the peripheral stalk, linking F(1) to F(0). The chain is ATP synthase subunit b from Thiobacillus denitrificans (strain ATCC 25259 / T1).